Consider the following 985-residue polypeptide: Ephrin type-B receptor 1-A (985 aa).

Residues 1–19 form the signal peptide; that stretch reads MELNVLLLLLCLSGGQVGA. The Extracellular portion of the chain corresponds to 20–542; that stretch reads VEETLMDTRT…YKSELREQLP (523 aa). One can recognise an Eph LBD domain in the interval 21–203; that stretch reads EETLMDTRTA…FFKEMPSVVQ (183 aa). 2 consecutive Fibronectin type-III domains span residues 324–434 and 435–532; these read VPSG…TNQA and APSS…TAED. N-linked (GlcNAc...) asparagine glycosylation is found at N336, N428, and N482. A helical membrane pass occupies residues 543–563; sequence LTGSAAAGVVFIVSLVAISIV. Topologically, residues 564–985 are cytoplasmic; it reads CSRKRTYSKE…QITQSPTSIA (422 aa). The region spanning 620–883 is the Protein kinase domain; that stretch reads VKIEEVIGAG…EIVNTLRPMI (264 aa). Residues 626–634 and K652 each bind ATP; that span reads IGAGEFGEV. D745 functions as the Proton acceptor in the catalytic mechanism. Residues 912–976 form the SAM domain; sequence SAFTSVDDWL…LNSIQSMRVQ (65 aa). Positions 983–985 match the PDZ-binding motif; it reads SIA.

It belongs to the protein kinase superfamily. Tyr protein kinase family. Ephrin receptor subfamily. Heterotetramer upon binding of the ligand. The heterotetramer is composed of an ephrin dimer and a receptor dimer. Oligomerization is probably required to induce biological responses. In terms of processing, phosphorylated. Autophosphorylation is stimulated by ligands.

It is found in the cell membrane. Its subcellular location is the early endosome membrane. It localises to the cell projection. The protein resides in the dendrite. It carries out the reaction L-tyrosyl-[protein] + ATP = O-phospho-L-tyrosyl-[protein] + ADP + H(+). Its function is as follows. Receptor tyrosine kinase which binds promiscuously transmembrane ephrin-B family ligands residing on adjacent cells, leading to contact-dependent bidirectional signaling into neighboring cells. The signaling pathway downstream of the receptor is referred to as forward signaling while the signaling pathway downstream of the ephrin ligand is referred to as reverse signaling. May play a role in axon guidance during nervous system development. May also play an important redundant role with other ephrin-B receptors in development and maturation of dendritic spines and synapse formation. More generally, may play a role in targeted cell migration and adhesion. Upon activation by ephrin-B ligands activates the MAPK/ERK and the JNK signaling cascades to regulate cell migration and adhesion respectively. In Xenopus laevis (African clawed frog), this protein is Ephrin type-B receptor 1-A (ephb1-a).